Here is a 164-residue protein sequence, read N- to C-terminus: Thiol peroxidase (164 aa).

Positions 16–162 (LQVGDIAKDF…YEAAINAAKI (147 aa)) constitute a Thioredoxin domain. C58 serves as the catalytic Cysteine sulfenic acid (-SOH) intermediate. C58 and C92 are oxidised to a cystine.

Belongs to the peroxiredoxin family. Tpx subfamily. In terms of assembly, homodimer.

The catalysed reaction is a hydroperoxide + [thioredoxin]-dithiol = an alcohol + [thioredoxin]-disulfide + H2O. Thiol-specific peroxidase that catalyzes the reduction of hydrogen peroxide and organic hydroperoxides to water and alcohols, respectively. Plays a role in cell protection against oxidative stress by detoxifying peroxides. This chain is Thiol peroxidase, found in Streptococcus agalactiae serotype III (strain NEM316).